The sequence spans 487 residues: UDP-glycosyltransferase 85A7 (487 aa).

Residues 364 to 366 (CPQ), 381 to 389 (HCGWNSTLE), and 403 to 406 (FSEQ) each bind UDP-alpha-D-glucose.

Belongs to the UDP-glycosyltransferase family. Expressed in roots, shoots, leaves and flowers.

The sequence is that of UDP-glycosyltransferase 85A7 (UGT85A7) from Arabidopsis thaliana (Mouse-ear cress).